A 262-amino-acid chain; its full sequence is 14-3-3-like protein GF14-E (262 aa).

It belongs to the 14-3-3 family. As to expression, ubiquitous.

It is found in the cytoplasm. The protein resides in the nucleus. In terms of biological role, is associated with a DNA binding complex that binds to the G box, a well-characterized cis-acting DNA regulatory element found in plant genes. The polypeptide is 14-3-3-like protein GF14-E (GF14E) (Oryza sativa subsp. japonica (Rice)).